Consider the following 90-residue polypeptide: Small ribosomal subunit protein uS15 (90 aa).

This sequence belongs to the universal ribosomal protein uS15 family. As to quaternary structure, part of the 30S ribosomal subunit. Forms a bridge to the 50S subunit in the 70S ribosome, contacting the 23S rRNA.

In terms of biological role, one of the primary rRNA binding proteins, it binds directly to 16S rRNA where it helps nucleate assembly of the platform of the 30S subunit by binding and bridging several RNA helices of the 16S rRNA. Its function is as follows. Forms an intersubunit bridge (bridge B4) with the 23S rRNA of the 50S subunit in the ribosome. The protein is Small ribosomal subunit protein uS15 of Mycoplasmoides gallisepticum (strain R(low / passage 15 / clone 2)) (Mycoplasma gallisepticum).